A 686-amino-acid chain; its full sequence is Heat shock 70 kDa protein 12B (686 aa).

The tract at residues 12 to 53 (LYIGSSPERSPVPSPPGSPRTQESCGIAPLTPSQSPKPEVRA) is disordered. Residues Ser-25 and Ser-29 each carry the phosphoserine modification. Thr-42 is modified (phosphothreonine). Ser-44, Ser-46, and Ser-276 each carry phosphoserine.

Belongs to the heat shock protein 70 family. In terms of tissue distribution, highest expression in muscle and heart. Lower levels in liver and kidney.

This chain is Heat shock 70 kDa protein 12B (HSPA12B), found in Homo sapiens (Human).